The primary structure comprises 77 residues: Conotoxin Vc6b (77 aa).

The N-terminal stretch at 1-22 (MKLTCMMIVAVLFLTANTFVTA) is a signal peptide. A propeptide spanning residues 23–47 (DDSGNGMENLFPKAGHEMENLEASN) is cleaved from the precursor. 3 cysteine pairs are disulfide-bonded: cysteine 52-cysteine 66, cysteine 59-cysteine 72, and cysteine 67-cysteine 76.

As to expression, expressed by the venom duct.

The protein localises to the secreted. In Conus victoriae (Queen Victoria cone), this protein is Conotoxin Vc6b.